The primary structure comprises 119 residues: Autophagy-related protein 8c (119 aa).

Gly117 carries the Phosphatidylethanolamine amidated glycine lipid modification. Residues 118-119 (LV) constitute a propeptide, removed in mature form.

It belongs to the ATG8 family. As to quaternary structure, interacts with ATG4. Interacts with NBR1. In terms of processing, the C-terminal 2 residues are removed by ATG4 to expose Gly-117 at the C-terminus. This Gly-117 forms then a thioester bond with the 'Cys-558' of ATG7 (E1-like activating enzyme) before being transferred to the 'Cys-258' of ATG3 (the specific E2 conjugating enzyme), in order to be finally amidated with phosphatidylethanolamine. This lipid modification anchors ATG8 to autophagosomes. As to expression, constitutively expressed.

Its subcellular location is the cytoplasmic vesicle. The protein resides in the autophagosome membrane. It localises to the vacuole membrane. It is found in the cytoplasm. The protein localises to the cytoskeleton. Its function is as follows. Ubiquitin-like modifier involved in autophagosomes formation. May mediate the delivery of the autophagosomes to the vacuole via the microtubule cytoskeleton. In Arabidopsis thaliana (Mouse-ear cress), this protein is Autophagy-related protein 8c (ATG8C).